The following is a 351-amino-acid chain: UDP-3-O-acylglucosamine N-acyltransferase (351 aa).

The Proton acceptor role is filled by H240.

This sequence belongs to the transferase hexapeptide repeat family. LpxD subfamily. As to quaternary structure, homotrimer.

It carries out the reaction a UDP-3-O-[(3R)-3-hydroxyacyl]-alpha-D-glucosamine + a (3R)-hydroxyacyl-[ACP] = a UDP-2-N,3-O-bis[(3R)-3-hydroxyacyl]-alpha-D-glucosamine + holo-[ACP] + H(+). The protein operates within bacterial outer membrane biogenesis; LPS lipid A biosynthesis. Catalyzes the N-acylation of UDP-3-O-acylglucosamine using 3-hydroxyacyl-ACP as the acyl donor. Is involved in the biosynthesis of lipid A, a phosphorylated glycolipid that anchors the lipopolysaccharide to the outer membrane of the cell. The protein is UDP-3-O-acylglucosamine N-acyltransferase of Methylacidiphilum infernorum (isolate V4) (Methylokorus infernorum (strain V4)).